We begin with the raw amino-acid sequence, 464 residues long: NADH dehydrogenase [ubiquinone] flavoprotein 1, mitochondrial (464 aa).

The N-terminal 20 residues, 1 to 20 (MLATRRLLGWSLPARVSVRF), are a transit peptide targeting the mitochondrion. Lys81 is modified (N6-acetyllysine; alternate). Lys81 carries the post-translational modification N6-succinyllysine; alternate. 87–96 (GRGGAGFPTG) contributes to the NADH binding site. At Lys104 the chain carries N6-acetyllysine. 199 to 247 (RGAGAYICGEETALIESIEGKQGKPRLKPPFPADVGVFGCPTTVANVET) contacts FMN. Position 257 is an omega-N-methylarginine (Arg257). Position 375 is an N6-acetyllysine (Lys375). [4Fe-4S] cluster-binding residues include Cys379, Cys382, Cys385, and Cys425.

This sequence belongs to the complex I 51 kDa subunit family. As to quaternary structure, core subunit of respiratory chain NADH dehydrogenase (Complex I) which is composed of 45 different subunits. This is a component of the flavoprotein-sulfur (FP) fragment of the enzyme. Interacts with RAB5IF. It depends on FMN as a cofactor. Requires [4Fe-4S] cluster as cofactor.

It localises to the mitochondrion inner membrane. It catalyses the reaction a ubiquinone + NADH + 5 H(+)(in) = a ubiquinol + NAD(+) + 4 H(+)(out). Its function is as follows. Core subunit of the mitochondrial membrane respiratory chain NADH dehydrogenase (Complex I) which catalyzes electron transfer from NADH through the respiratory chain, using ubiquinone as an electron acceptor. Part of the peripheral arm of the enzyme, where the electrons from NADH are accepted by flavin mononucleotide (FMN) and then passed along a chain of iron-sulfur clusters by electron tunnelling to the final acceptor ubiquinone. Contains FMN, which is the initial electron acceptor as well as one iron-sulfur cluster. The chain is NADH dehydrogenase [ubiquinone] flavoprotein 1, mitochondrial from Homo sapiens (Human).